Reading from the N-terminus, the 447-residue chain is Chorismate synthase, chloroplastic (447 aa).

A disordered region spans residues 1-24; the sequence is MASSLSTKPFLSGSRRRSTTDGSG. Residues 1–57 constitute a chloroplast transit peptide; the sequence is MASSLSTKPFLSGSRRRSTTDGSGWSYFQTSDLRQLSNQSVQISVRRQTAPLKLVVQ.

The protein belongs to the chorismate synthase family. Homotetramer. It depends on FMNH2 as a cofactor. The N-terminus is blocked.

It is found in the plastid. It localises to the chloroplast. The enzyme catalyses 5-O-(1-carboxyvinyl)-3-phosphoshikimate = chorismate + phosphate. The protein operates within metabolic intermediate biosynthesis; chorismate biosynthesis; chorismate from D-erythrose 4-phosphate and phosphoenolpyruvate: step 7/7. Its function is as follows. Catalyzes the last common step of the biosynthesis of aromatic amino acids, produced via the shikimic acid pathway. In Capnoides sempervirens (Rock-harlequin), this protein is Chorismate synthase, chloroplastic.